A 554-amino-acid polypeptide reads, in one-letter code: Alpha-taxilin (554 aa).

The interval 1-66 (MKNQDKKNGP…ARAKAAQPGA (66 aa)) is disordered. A Phosphoserine modification is found at serine 71. Residues 85 to 166 (YCVDNNQGGP…RRPQEKKKAK (82 aa)) form a disordered region. Positions 91–103 (QGGPAEEGAQGEP) are enriched in low complexity. Positions 143 to 158 (EEIRASDEVGDRDHRR) are enriched in basic and acidic residues. The stretch at 186–491 (EEKLAALCKK…NKRVQDLTAG (306 aa)) forms a coiled coil. The tract at residues 492–554 (GITDIGSERR…GPGEPTPATA (63 aa)) is disordered. Serine 515 and serine 523 each carry phosphoserine.

It belongs to the taxilin family. In terms of assembly, binds to the C-terminal coiled coil region of syntaxin family members STX1A, STX3A and STX4A, but not when these proteins are complexed with SNAP25, VAMP2 or STXBP1, suggesting that it interacts with syntaxins that do not form the SNARE complex.

May be involved in intracellular vesicle traffic and potentially in calcium-dependent exocytosis in neuroendocrine cells. This is Alpha-taxilin (Txlna) from Mus musculus (Mouse).